The primary structure comprises 279 residues: Fatty acid desaturase 4-like 2, chloroplastic (279 aa).

The N-terminal 30 residues, 1-30 (MATSLQTKYTLNPITNNIPRSHRPSFLRVT), are a transit peptide targeting the chloroplast. 3 consecutive transmembrane segments (helical) span residues 68 to 90 (LWVAAGCTTVFVSFSKSIIGAFG), 98 to 118 (SLAGFAGYILADLGSGVYHWA), and 178 to 198 (VVHGFVSMFAFCVLFCQLFHA).

The protein belongs to the fatty acid desaturase CarF family.

The protein resides in the plastid. Its subcellular location is the chloroplast membrane. Its pathway is lipid metabolism; fatty acid metabolism. Its function is as follows. Fatty acid desaturase involved in the production of chloroplast-specific phosphatidylglycerol molecular species. Catalyzes the formation of a trans double bond introduced close to the carboxyl group of palmitic acid, which is specifically esterified to the sn-2 glyceryl carbon of phosphatidylglycerol. The protein is Fatty acid desaturase 4-like 2, chloroplastic (FAD4L2) of Arabidopsis thaliana (Mouse-ear cress).